The chain runs to 290 residues: Type II secretion system protein C (290 aa).

The Cytoplasmic segment spans residues 1-28; that stretch reads MTLPFRNDLLSSLLARCKTVPLSRFSQP. Residues 29 to 46 traverse the membrane as a helical segment; sequence LFWLLLLLLAHQCAGLTW. At 47 to 290 the chain is on the periplasmic side; that stretch reads RLLDLGSQQA…LYDVYVGLSE (244 aa).

The protein belongs to the GSP C family.

It is found in the cell inner membrane. Its function is as follows. Involved in a type II secretion system (T2SS, formerly general secretion pathway, GSP) for the export of proteins. This chain is Type II secretion system protein C (exeC), found in Aeromonas hydrophila.